We begin with the raw amino-acid sequence, 128 residues long: Fluoride-specific ion channel FluC (128 aa).

Helical transmembrane passes span 5–25, 34–54, 67–87, and 99–119; these read LFIS…GLLF, FGAL…LGLF, FLIT…SEVV, and FCVL…GIWI. Gly74 and Thr77 together coordinate Na(+).

The protein belongs to the fluoride channel Fluc/FEX (TC 1.A.43) family.

The protein localises to the cell inner membrane. It catalyses the reaction fluoride(in) = fluoride(out). With respect to regulation, na(+) is not transported, but it plays an essential structural role and its presence is essential for fluoride channel function. Its function is as follows. Fluoride-specific ion channel. Important for reducing fluoride concentration in the cell, thus reducing its toxicity. The polypeptide is Fluoride-specific ion channel FluC (Haemophilus influenzae (strain PittEE)).